Consider the following 229-residue polypeptide: Enolase-phosphatase E1 (229 aa).

It belongs to the HAD-like hydrolase superfamily. MasA/MtnC family. In terms of assembly, monomer. The cofactor is Mg(2+).

The catalysed reaction is 5-methylsulfanyl-2,3-dioxopentyl phosphate + H2O = 1,2-dihydroxy-5-(methylsulfanyl)pent-1-en-3-one + phosphate. The protein operates within amino-acid biosynthesis; L-methionine biosynthesis via salvage pathway; L-methionine from S-methyl-5-thio-alpha-D-ribose 1-phosphate: step 3/6. It functions in the pathway amino-acid biosynthesis; L-methionine biosynthesis via salvage pathway; L-methionine from S-methyl-5-thio-alpha-D-ribose 1-phosphate: step 4/6. Its function is as follows. Bifunctional enzyme that catalyzes the enolization of 2,3-diketo-5-methylthiopentyl-1-phosphate (DK-MTP-1-P) into the intermediate 2-hydroxy-3-keto-5-methylthiopentenyl-1-phosphate (HK-MTPenyl-1-P), which is then dephosphorylated to form the acireductone 1,2-dihydroxy-3-keto-5-methylthiopentene (DHK-MTPene). This Pectobacterium carotovorum subsp. carotovorum (strain PC1) protein is Enolase-phosphatase E1.